The sequence spans 689 residues: DNA ligase (689 aa).

NAD(+) is bound by residues 35 to 39 (DEVYD), 84 to 85 (SL), and glutamate 122. The N6-AMP-lysine intermediate role is filled by lysine 124. Residues arginine 145, glutamate 182, lysine 308, and lysine 332 each coordinate NAD(+). Cysteine 426, cysteine 429, cysteine 444, and cysteine 449 together coordinate Zn(2+). In terms of domain architecture, BRCT spans 612–689 (TTEKSLNGKR…NETELIQMCR (78 aa)).

This sequence belongs to the NAD-dependent DNA ligase family. LigA subfamily. The cofactor is Mg(2+). Requires Mn(2+) as cofactor.

It catalyses the reaction NAD(+) + (deoxyribonucleotide)n-3'-hydroxyl + 5'-phospho-(deoxyribonucleotide)m = (deoxyribonucleotide)n+m + AMP + beta-nicotinamide D-nucleotide.. Its function is as follows. DNA ligase that catalyzes the formation of phosphodiester linkages between 5'-phosphoryl and 3'-hydroxyl groups in double-stranded DNA using NAD as a coenzyme and as the energy source for the reaction. It is essential for DNA replication and repair of damaged DNA. This Thermosynechococcus vestitus (strain NIES-2133 / IAM M-273 / BP-1) protein is DNA ligase.